A 24-amino-acid chain; its full sequence is Potassium channel toxin alpha-KTx 6 OcyKTx5 (24 aa).

A disulfide bridge connects residues C3 and C24.

Belongs to the short scorpion toxin superfamily. Potassium channel inhibitor family. Alpha-KTx 06 subfamily. In terms of tissue distribution, expressed by the venom gland.

Its subcellular location is the secreted. In terms of biological role, blocks voltage-gated potassium channels. The polypeptide is Potassium channel toxin alpha-KTx 6 OcyKTx5 (Opisthacanthus cayaporum (South American scorpion)).